A 378-amino-acid chain; its full sequence is tRNA (guanine(26)-N(2))-dimethyltransferase (378 aa).

Residues 4–374 (KEVTEGKVRI…KGYEEIIRCV (371 aa)) enclose the Trm1 methyltransferase domain. S-adenosyl-L-methionine is bound by residues R44, R69, D87, D114, and A115. 4 residues coordinate Zn(2+): C246, C249, C263, and C266.

It belongs to the class I-like SAM-binding methyltransferase superfamily. Trm1 family.

The catalysed reaction is guanosine(26) in tRNA + 2 S-adenosyl-L-methionine = N(2)-dimethylguanosine(26) in tRNA + 2 S-adenosyl-L-homocysteine + 2 H(+). Functionally, dimethylates a single guanine residue at position 26 of a number of tRNAs using S-adenosyl-L-methionine as donor of the methyl groups. This is tRNA (guanine(26)-N(2))-dimethyltransferase from Saccharolobus islandicus (strain M.14.25 / Kamchatka #1) (Sulfolobus islandicus).